A 266-amino-acid chain; its full sequence is Adaptin ear-binding coat-associated protein 2 (266 aa).

2 disordered regions span residues S164 to P191 and G244 to F266. S181 carries the post-translational modification Phosphoserine. The WXXF motif 1 motif lies at W243–F246. A compositionally biased stretch (low complexity) spans T247–Q258. Residues W263–F266 carry the WXXF motif 2 motif.

This sequence belongs to the NECAP family. In terms of assembly, interacts with AP1G1 and AP2A1 components of the adapter protein complexes AP-1 and AP-2. Interacts with the GAE domain proteins GGA1, GGA2 and GGA3.

The protein resides in the cytoplasmic vesicle. It localises to the clathrin-coated vesicle membrane. Its subcellular location is the cell membrane. Functionally, involved in endocytosis. The protein is Adaptin ear-binding coat-associated protein 2 (NECAP2) of Bos taurus (Bovine).